The chain runs to 185 residues: UPF0301 protein HDEF_0602 (185 aa).

Belongs to the UPF0301 (AlgH) family.

The polypeptide is UPF0301 protein HDEF_0602 (Hamiltonella defensa subsp. Acyrthosiphon pisum (strain 5AT)).